A 241-amino-acid polypeptide reads, in one-letter code: Purine nucleoside phosphorylase DeoD-type 1 (241 aa).

H5 is an a purine D-ribonucleoside binding site. Residues G21, R25, R44, and 88–91 (RVGS) each bind phosphate. A purine D-ribonucleoside-binding positions include 180-182 (EME) and 204-205 (SD). Residue D205 is the Proton donor of the active site.

The protein belongs to the PNP/UDP phosphorylase family. Homohexamer; trimer of homodimers.

The catalysed reaction is a purine D-ribonucleoside + phosphate = a purine nucleobase + alpha-D-ribose 1-phosphate. The enzyme catalyses a purine 2'-deoxy-D-ribonucleoside + phosphate = a purine nucleobase + 2-deoxy-alpha-D-ribose 1-phosphate. Its function is as follows. Catalyzes the reversible phosphorolytic breakdown of the N-glycosidic bond in the beta-(deoxy)ribonucleoside molecules, with the formation of the corresponding free purine bases and pentose-1-phosphate. In Vibrio cholerae serotype O1 (strain ATCC 39315 / El Tor Inaba N16961), this protein is Purine nucleoside phosphorylase DeoD-type 1.